We begin with the raw amino-acid sequence, 80 residues long: Cytochrome c oxidase subunit 7B, mitochondrial (80 aa).

The N-terminal 24 residues, 1 to 24, are a transit peptide targeting the mitochondrion; it reads MFPLVKNALNRLQVRSIQQTMARQ. Residues 25-32 are Mitochondrial matrix-facing; the sequence is SHQKRTPD. The chain crosses the membrane as a helical span at residues 33-59; the sequence is FHDKYGNAVLASGATFCIVTWTYVATQ. Topologically, residues 60–80 are mitochondrial intermembrane; that stretch reads VGIEWNLSPVGRVTPKEWRNQ.

This sequence belongs to the cytochrome c oxidase VIIb family. As to quaternary structure, component of the cytochrome c oxidase (complex IV, CIV), a multisubunit enzyme composed of 14 subunits. The complex is composed of a catalytic core of 3 subunits MT-CO1, MT-CO2 and MT-CO3, encoded in the mitochondrial DNA, and 11 supernumerary subunits COX4I, COX5A, COX5B, COX6A, COX6B, COX6C, COX7A, COX7B, COX7C, COX8 and NDUFA4, which are encoded in the nuclear genome. The complex exists as a monomer or a dimer and forms supercomplexes (SCs) in the inner mitochondrial membrane with NADH-ubiquinone oxidoreductase (complex I, CI) and ubiquinol-cytochrome c oxidoreductase (cytochrome b-c1 complex, complex III, CIII), resulting in different assemblies (supercomplex SCI(1)III(2)IV(1) and megacomplex MCI(2)III(2)IV(2)).

The protein resides in the mitochondrion inner membrane. Its pathway is energy metabolism; oxidative phosphorylation. In terms of biological role, component of the cytochrome c oxidase, the last enzyme in the mitochondrial electron transport chain which drives oxidative phosphorylation. The respiratory chain contains 3 multisubunit complexes succinate dehydrogenase (complex II, CII), ubiquinol-cytochrome c oxidoreductase (cytochrome b-c1 complex, complex III, CIII) and cytochrome c oxidase (complex IV, CIV), that cooperate to transfer electrons derived from NADH and succinate to molecular oxygen, creating an electrochemical gradient over the inner membrane that drives transmembrane transport and the ATP synthase. Cytochrome c oxidase is the component of the respiratory chain that catalyzes the reduction of oxygen to water. Electrons originating from reduced cytochrome c in the intermembrane space (IMS) are transferred via the dinuclear copper A center (CU(A)) of subunit 2 and heme A of subunit 1 to the active site in subunit 1, a binuclear center (BNC) formed by heme A3 and copper B (CU(B)). The BNC reduces molecular oxygen to 2 water molecules using 4 electrons from cytochrome c in the IMS and 4 protons from the mitochondrial matrix. Plays a role in proper central nervous system (CNS) development in vertebrates. The chain is Cytochrome c oxidase subunit 7B, mitochondrial (COX7B) from Pongo abelii (Sumatran orangutan).